We begin with the raw amino-acid sequence, 368 residues long: Metacaspase-6 (368 aa).

Catalysis depends on residues histidine 86 and cysteine 139. Residue cysteine 139 is modified to S-nitrosocysteine. The interval glycine 153–alanine 174 is disordered.

It belongs to the peptidase C14B family. Post-translationally, proteolytically processed; by an autocatalytic mechanism. Expressed in roots and flower buds.

The sequence is that of Metacaspase-6 (AMC6) from Arabidopsis thaliana (Mouse-ear cress).